The sequence spans 448 residues: tRNA modification GTPase MnmE (448 aa).

Positions 25, 83, and 122 each coordinate (6S)-5-formyl-5,6,7,8-tetrahydrofolate. Residues 218–372 (GFKVAIIGKP…LTQKLQKLLD (155 aa)) form the TrmE-type G domain. Asn-228 is a K(+) binding site. Residues 228-233 (NTGKSS), 247-253 (SDIAGTT), and 272-275 (DTAG) contribute to the GTP site. Ser-232 contacts Mg(2+). The K(+) site is built by Ser-247, Ile-249, and Thr-252. Thr-253 contributes to the Mg(2+) binding site. Residue Lys-448 participates in (6S)-5-formyl-5,6,7,8-tetrahydrofolate binding.

The protein belongs to the TRAFAC class TrmE-Era-EngA-EngB-Septin-like GTPase superfamily. TrmE GTPase family. As to quaternary structure, homodimer. Heterotetramer of two MnmE and two MnmG subunits. K(+) serves as cofactor.

The protein localises to the cytoplasm. Its function is as follows. Exhibits a very high intrinsic GTPase hydrolysis rate. Involved in the addition of a carboxymethylaminomethyl (cmnm) group at the wobble position (U34) of certain tRNAs, forming tRNA-cmnm(5)s(2)U34. This Nitratiruptor sp. (strain SB155-2) protein is tRNA modification GTPase MnmE.